The following is a 400-amino-acid chain: Diphosphomevalonate decarboxylase (400 aa).

(R)-5-diphosphomevalonate is bound by residues 25-28, R80, 155-160, and T211; these read YWGK and SGSACR.

It belongs to the diphosphomevalonate decarboxylase family. As to quaternary structure, homodimer.

It localises to the cytoplasm. It catalyses the reaction (R)-5-diphosphomevalonate + ATP = isopentenyl diphosphate + ADP + phosphate + CO2. Its pathway is steroid biosynthesis; cholesterol biosynthesis. Its function is as follows. Catalyzes the ATP dependent decarboxylation of (R)-5-diphosphomevalonate to form isopentenyl diphosphate (IPP). Functions in the mevalonate (MVA) pathway leading to isopentenyl diphosphate (IPP), a key precursor for the biosynthesis of isoprenoids and sterol synthesis. This Danio rerio (Zebrafish) protein is Diphosphomevalonate decarboxylase (mvd).